Here is a 116-residue protein sequence, read N- to C-terminus: Aspartate 1-decarboxylase (116 aa).

The active-site Schiff-base intermediate with substrate; via pyruvic acid is the S25. At S25 the chain carries Pyruvic acid (Ser). T57 serves as a coordination point for substrate. The Proton donor role is filled by Y58. 73–75 (GAA) contacts substrate.

The protein belongs to the PanD family. As to quaternary structure, heterooctamer of four alpha and four beta subunits. Requires pyruvate as cofactor. Post-translationally, is synthesized initially as an inactive proenzyme, which is activated by self-cleavage at a specific serine bond to produce a beta-subunit with a hydroxyl group at its C-terminus and an alpha-subunit with a pyruvoyl group at its N-terminus.

The protein resides in the cytoplasm. It carries out the reaction L-aspartate + H(+) = beta-alanine + CO2. It functions in the pathway cofactor biosynthesis; (R)-pantothenate biosynthesis; beta-alanine from L-aspartate: step 1/1. Its function is as follows. Catalyzes the pyruvoyl-dependent decarboxylation of aspartate to produce beta-alanine. This is Aspartate 1-decarboxylase from Leptospira interrogans serogroup Icterohaemorrhagiae serovar copenhageni (strain Fiocruz L1-130).